Here is a 577-residue protein sequence, read N- to C-terminus: Arginine--tRNA ligase (577 aa).

A 'HIGH' region motif is present at residues 122–132; it reads PNVAKEMHVGH.

This sequence belongs to the class-I aminoacyl-tRNA synthetase family. As to quaternary structure, monomer.

It localises to the cytoplasm. The enzyme catalyses tRNA(Arg) + L-arginine + ATP = L-arginyl-tRNA(Arg) + AMP + diphosphate. The protein is Arginine--tRNA ligase of Salmonella paratyphi B (strain ATCC BAA-1250 / SPB7).